The sequence spans 272 residues: Golgi to ER traffic protein 5 (272 aa).

Disordered regions lie at residues 1–35 and 85–105; these read MSTV…HSGT and LHAP…PGSS. The 91-residue stretch at 108 to 198 folds into the Ubiquitin-like domain; that stretch reads ITVHLKSARN…VEFGVMIIGG (91 aa). The tract at residues 212 to 231 is disordered; the sequence is SAEQKESYEPPKPAVGPSGE.

It belongs to the GET5 family. Forms homodimers via its C-terminal domain. Component of the get4/get5/sgt2 sorting complex. Binds directly sgt12 homodimers.

It is found in the cytoplasm. Functionally, component of the get4/get5/sgt2 sorting complex involved in the GET (guided entry of TA proteins) pathway that leads to the insertion of tail-anchored (TA) proteins into the endoplasmic reticulum. Get4 and get5 form an obligate complex that catalyzes the transfer of tail-anchored proteins destined to the endoplasmic reticulum from sgt2 to the cytosolic targeting factor which then targets the TA protein to the ER membrane via get1/get2. This is Golgi to ER traffic protein 5 from Aspergillus fumigatus (strain ATCC MYA-4609 / CBS 101355 / FGSC A1100 / Af293) (Neosartorya fumigata).